A 70-amino-acid chain; its full sequence is Large ribosomal subunit protein bL32c (70 aa).

Disordered stretches follow at residues 1 to 20 (MAVPKKRTSRSKKKIRKNVR) and 51 to 70 (NDDSSGSSESKLTAIDLDDP). A compositionally biased stretch (polar residues) spans 52–61 (DDSSGSSESK).

This sequence belongs to the bacterial ribosomal protein bL32 family.

Its subcellular location is the plastid. It localises to the chloroplast. The sequence is that of Large ribosomal subunit protein bL32c (rpl32) from Pinus thunbergii (Japanese black pine).